We begin with the raw amino-acid sequence, 766 residues long: MGAAILPDLGTEILIPVCAVIGIAFALFQWLLVSKVKLSAVRDASPNAAAKNGYNDYLIEEEEGINDHNVVVKCAEIQNAISEGATSFLFTEYKYVGIFMVAFAILIFLFLGSVEGFSTSPQACSYDKTKTCKPALATAIFSTVSFLLGGVTSLVSGFLGMKIATYANARTTLEARKGVGKAFITAFRSGAVMGFLLAANGLLVLYIAINLFKIYYGDDWGGLFEAITGYGLGGSSMALFGRVGGGIYTKAADVGADLVGKVERNIPEDDPRNPAVIADNVGDNVGDIAGMGSDLFGSYAESSCAALVVASISSFGLNHELTAMLYPLIVSSVGILVCLLTTLFATDFFEIKAVKEIEPALKKQLVISTVLMTIGVAVVSFVALPTSFTIFNFGVQKDVKSWQLFLCVAVGLWAGLIIGFVTEYYTSNAYSPVQDVADSCRTGAATNVIFGLALGYKSVIIPIFAIAISIFVSFTFAAMYGIAVAALGMLSTIATGLAIDAYGPISDNAGGIAEMAGMSHRIRERTDALDAAGNTTAAIGKGFAIGSAALVSLALFGAFVSRASITTVDVLTPKVFIGLIVGAMLPYWFSAMTMKSVGSAALKMVEEVRRQFNTIPGLMEGTAKPDYATCVKISTDASIKEMIPPGALVMLTPLVVGILFGVETLSGVLAGSLVSGVQIAISASNTGGAWDNAKKYIEAGASEHARSLGPKGSDCHKAAVIGDTIGDPLKDTSGPSLNILIKLMAVESLVFAPFFATHGGLLFKIF.

The Intravacuolar segment spans residues 2–8 (GAAILPD). The helical transmembrane segment at 9–35 (LGTEILIPVCAVIGIAFALFQWLLVSK) threads the bilayer. Residues 36-84 (VKLSAVRDASPNAAAKNGYNDYLIEEEEGINDHNVVVKCAEIQNAISEG) lie on the Cytoplasmic side of the membrane. Residues 85–114 (ATSFLFTEYKYVGIFMVAFAILIFLFLGSV) traverse the membrane as a helical segment. The Intravacuolar portion of the chain corresponds to 115–135 (EGFSTSPQACSYDKTKTCKPA). Cys-124 and Cys-132 are disulfide-bonded. A helical transmembrane segment spans residues 136 to 163 (LATAIFSTVSFLLGGVTSLVSGFLGMKI). Residues 164–186 (ATYANARTTLEARKGVGKAFITA) are Cytoplasmic-facing. The helical transmembrane segment at 187-216 (FRSGAVMGFLLAANGLLVLYIAINLFKIYY) threads the bilayer. At 217–219 (GDD) the chain is on the intravacuolar side. A helical transmembrane segment spans residues 220 to 248 (WGGLFEAITGYGLGGSSMALFGRVGGGIY). The Cytoplasmic portion of the chain corresponds to 249 to 286 (TKAADVGADLVGKVERNIPEDDPRNPAVIADNVGDNVG). Residue Lys-250 coordinates substrate. Positions 253, 257, and 283 each coordinate Mg(2+). The chain crosses the membrane as a helical span at residues 287–312 (DIAGMGSDLFGSYAESSCAALVVASI). Topologically, residues 313–320 (SSFGLNHE) are intravacuolar. Residues 321-346 (LTAMLYPLIVSSVGILVCLLTTLFAT) traverse the membrane as a helical segment. Topologically, residues 347–354 (DFFEIKAV) are cytoplasmic. The chain crosses the membrane as a helical span at residues 355-382 (KEIEPALKKQLVISTVLMTIGVAVVSFV). Topologically, residues 383–401 (ALPTSFTIFNFGVQKDVKS) are intravacuolar. A helical transmembrane segment spans residues 402–425 (WQLFLCVAVGLWAGLIIGFVTEYY). The Cytoplasmic portion of the chain corresponds to 426–447 (TSNAYSPVQDVADSCRTGAATN). Residues 448–472 (VIFGLALGYKSVIIPIFAIAISIFV) form a helical membrane-spanning segment. Residues 473 to 478 (SFTFAA) are Intravacuolar-facing. A helical transmembrane segment spans residues 479–505 (MYGIAVAALGMLSTIATGLAIDAYGPI). The Cytoplasmic segment spans residues 506 to 534 (SDNAGGIAEMAGMSHRIRERTDALDAAGN). The Mg(2+) site is built by Asp-507 and Asn-534. The helical transmembrane segment at 535–563 (TTAAIGKGFAIGSAALVSLALFGAFVSRA) threads the bilayer. Residues 564–573 (SITTVDVLTP) are Intravacuolar-facing. The chain crosses the membrane as a helical span at residues 574–602 (KVFIGLIVGAMLPYWFSAMTMKSVGSAAL). The Cytoplasmic portion of the chain corresponds to 603 to 631 (KMVEEVRRQFNTIPGLMEGTAKPDYATCV). A helical transmembrane segment spans residues 632 to 660 (KISTDASIKEMIPPGALVMLTPLVVGILF). Gly-661 is a topological domain (intravacuolar). A helical transmembrane segment spans residues 662-689 (VETLSGVLAGSLVSGVQIAISASNTGGA). Over 690-732 (WDNAKKYIEAGASEHARSLGPKGSDCHKAAVIGDTIGDPLKDT) the chain is Cytoplasmic. Mg(2+)-binding residues include Asp-691 and Asp-727. Lys-730 is a binding site for substrate. A helical membrane pass occupies residues 733 to 758 (SGPSLNILIKLMAVESLVFAPFFATH). The Intravacuolar segment spans residues 759-765 (GGLLFKI).

The protein belongs to the H(+)-translocating pyrophosphatase (TC 3.A.10) family. K(+)-stimulated subfamily. As to quaternary structure, homodimer.

It is found in the vacuole membrane. The enzyme catalyses diphosphate + H2O + H(+)(in) = 2 phosphate + 2 H(+)(out). Its activity is regulated as follows. Inhibited by excess pyrophosphate as well as excess Mg(2+). Inhibition by ATP, GTP, and CTP is reversed by increasing the Mg(2+) concentration. This suggests that the substrate is a particular metal complex such as MgPPi(2-). Modification of Asp-283 with DCCD abolishes pyrophosphatase activity. Its function is as follows. Proton-translocating inorganic pyrophosphatase that contributes to the transtonoplast (from cytosol to vacuole lumen) H(+)-electrochemical potential difference. It establishes a proton gradient of similar and often greater magnitude than the H(+)-ATPase on the same membrane. This Vigna radiata var. radiata (Mung bean) protein is Pyrophosphate-energized vacuolar membrane proton pump.